A 197-amino-acid chain; its full sequence is Nucleoside triphosphate pyrophosphatase (197 aa).

The active-site Proton acceptor is aspartate 71.

Belongs to the Maf family. It depends on a divalent metal cation as a cofactor.

It is found in the cytoplasm. It catalyses the reaction a ribonucleoside 5'-triphosphate + H2O = a ribonucleoside 5'-phosphate + diphosphate + H(+). The catalysed reaction is a 2'-deoxyribonucleoside 5'-triphosphate + H2O = a 2'-deoxyribonucleoside 5'-phosphate + diphosphate + H(+). Its function is as follows. Nucleoside triphosphate pyrophosphatase. May have a dual role in cell division arrest and in preventing the incorporation of modified nucleotides into cellular nucleic acids. The protein is Nucleoside triphosphate pyrophosphatase of Nostoc punctiforme (strain ATCC 29133 / PCC 73102).